A 136-amino-acid chain; its full sequence is MSLFNIFNISGSALETQSKKMDVHAKNLANSDSYIYKNGTLYPYVARIPMLQFDPISENNVGGVKMHTVAGDTSSLKSIYNPNSPIADSNGYSKVSNVDIMSETINAITASKNYQTNLEILNTTKNMIMKTLTIGQ.

This sequence belongs to the flagella basal body rod proteins family. The basal body constitutes a major portion of the flagellar organelle and consists of four rings (L,P,S, and M) mounted on a central rod. The rod consists of about 26 subunits of FlgG in the distal portion, and FlgB, FlgC and FlgF are thought to build up the proximal portion of the rod with about 6 subunits each.

The protein localises to the bacterial flagellum basal body. The sequence is that of Flagellar basal-body rod protein FlgC (flgC) from Buchnera aphidicola subsp. Baizongia pistaciae (strain Bp).